Here is a 145-residue protein sequence, read N- to C-terminus: Actin-depolymerizing factor 2 (145 aa).

Positions 13–145 (GMGVAPDIRD…DLEVLRERAH (133 aa)) constitute an ADF-H domain.

The protein belongs to the actin-binding proteins ADF family.

Actin-depolymerizing protein. Severs actin filaments (F-actin) and binds to actin monomers. The polypeptide is Actin-depolymerizing factor 2 (ADF2) (Oryza sativa subsp. japonica (Rice)).